Reading from the N-terminus, the 20-residue chain is Venom protease (20 aa).

This sequence belongs to the peptidase S1 family. In terms of processing, contains 3 disulfide bonds. Post-translationally, N-glycosylated. As to expression, expressed by the venom duct.

It localises to the secreted. The chain is Venom protease from Bombus terrestris (Buff-tailed bumblebee).